A 238-amino-acid polypeptide reads, in one-letter code: Large ribosomal subunit protein uL1 (238 aa).

This sequence belongs to the universal ribosomal protein uL1 family. In terms of assembly, part of the 50S ribosomal subunit.

Functionally, binds directly to 23S rRNA. The L1 stalk is quite mobile in the ribosome, and is involved in E site tRNA release. In terms of biological role, protein L1 is also a translational repressor protein, it controls the translation of the L11 operon by binding to its mRNA. The protein is Large ribosomal subunit protein uL1 of Rippkaea orientalis (strain PCC 8801 / RF-1) (Cyanothece sp. (strain PCC 8801)).